We begin with the raw amino-acid sequence, 128 residues long: Ribonuclease P protein component (128 aa).

The protein belongs to the RnpA family. As to quaternary structure, consists of a catalytic RNA component (M1 or rnpB) and a protein subunit.

The enzyme catalyses Endonucleolytic cleavage of RNA, removing 5'-extranucleotides from tRNA precursor.. Functionally, RNaseP catalyzes the removal of the 5'-leader sequence from pre-tRNA to produce the mature 5'-terminus. It can also cleave other RNA substrates such as 4.5S RNA. The protein component plays an auxiliary but essential role in vivo by binding to the 5'-leader sequence and broadening the substrate specificity of the ribozyme. The polypeptide is Ribonuclease P protein component (Prochlorococcus marinus (strain MIT 9313)).